Consider the following 518-residue polypeptide: Bifunctional purine biosynthesis protein PurH (518 aa).

The 144-residue stretch at 1-144 (MNRRAVLSVS…KNQERVSIVV (144 aa)) folds into the MGS-like domain.

It belongs to the PurH family.

The enzyme catalyses (6R)-10-formyltetrahydrofolate + 5-amino-1-(5-phospho-beta-D-ribosyl)imidazole-4-carboxamide = 5-formamido-1-(5-phospho-D-ribosyl)imidazole-4-carboxamide + (6S)-5,6,7,8-tetrahydrofolate. It catalyses the reaction IMP + H2O = 5-formamido-1-(5-phospho-D-ribosyl)imidazole-4-carboxamide. It participates in purine metabolism; IMP biosynthesis via de novo pathway; 5-formamido-1-(5-phospho-D-ribosyl)imidazole-4-carboxamide from 5-amino-1-(5-phospho-D-ribosyl)imidazole-4-carboxamide (10-formyl THF route): step 1/1. The protein operates within purine metabolism; IMP biosynthesis via de novo pathway; IMP from 5-formamido-1-(5-phospho-D-ribosyl)imidazole-4-carboxamide: step 1/1. In Desulfitobacterium hafniense (strain DSM 10664 / DCB-2), this protein is Bifunctional purine biosynthesis protein PurH.